The sequence spans 90 residues: Probable Fe(2+)-trafficking protein (90 aa).

It belongs to the Fe(2+)-trafficking protein family.

In terms of biological role, could be a mediator in iron transactions between iron acquisition and iron-requiring processes, such as synthesis and/or repair of Fe-S clusters in biosynthetic enzymes. The sequence is that of Probable Fe(2+)-trafficking protein from Xylella fastidiosa (strain 9a5c).